The sequence spans 110 residues: Putative UPF0377 protein YIR040C (110 aa).

Belongs to the UPF0377 family.

The polypeptide is Putative UPF0377 protein YIR040C (Saccharomyces cerevisiae (strain ATCC 204508 / S288c) (Baker's yeast)).